Consider the following 295-residue polypeptide: Iron-sulfur cluster carrier protein (295 aa).

38 to 45 (GKGGVGKS) contacts ATP.

The protein belongs to the Mrp/NBP35 ATP-binding proteins family. As to quaternary structure, homodimer.

In terms of biological role, binds and transfers iron-sulfur (Fe-S) clusters to target apoproteins. Can hydrolyze ATP. In Pyrococcus furiosus (strain ATCC 43587 / DSM 3638 / JCM 8422 / Vc1), this protein is Iron-sulfur cluster carrier protein.